Reading from the N-terminus, the 927-residue chain is SPX and EXS domain-containing protein 5 (927 aa).

Residues 1-460 enclose the SPX domain; that stretch reads MKFGKYLESQ…GLSIGSQVMS (460 aa). Disordered regions lie at residues 54 to 78, 204 to 239, 257 to 305, and 326 to 355; these read KINSKQPSPTTATATTTTIGISSSN, KKNKLNNNNNNNNNNNNNNNNTTSPPPLSHDQQHLQ, PIKS…DQDP, and SDNCNDNGASDEFNGSVNNNGAGSGGGGNN. Composition is skewed to low complexity over residues 60–78 and 208–224; these read PSPTTATATTTTIGISSSN and LNNNNNNNNNNNNNNNN. Over residues 257–270 the composition is skewed to polar residues; the sequence is PIKSTPLSPKQQDG. Acidic residues predominate over residues 286–299; the sequence is LEEEEEEEEEEDDN. 8 helical membrane passes run 516–536, 553–573, 597–617, 636–656, 682–702, 769–789, 845–862, and 869–889; these read FFSGVCAGWTSALLMLIYYFI, VYSAFGLVLLWAFIFGIDCWV, IFQAVTLLSVMWITSIGVYMW, PLVLFGAYMLILVCPFNIFQL, FFMGDQLSSLVLMIVQFAQFV, LSIVVVVCSTLDGFFSGDSGW, FVYYFAIFSNLGFRTTWT, and QLTNILPSYKLVVVIGIIEIL. The 211-residue stretch at 717 to 927 folds into the EXS domain; the sequence is GCIRYARYFN…LPYQIRDNEN (211 aa).

It belongs to the SYG1 (TC 2.A.94) family.

The protein resides in the membrane. In Dictyostelium discoideum (Social amoeba), this protein is SPX and EXS domain-containing protein 5.